Reading from the N-terminus, the 134-residue chain is ATP synthase epsilon chain (134 aa).

It belongs to the ATPase epsilon chain family. F-type ATPases have 2 components, CF(1) - the catalytic core - and CF(0) - the membrane proton channel. CF(1) has five subunits: alpha(3), beta(3), gamma(1), delta(1), epsilon(1). CF(0) has three main subunits: a, b and c.

It is found in the cell inner membrane. Functionally, produces ATP from ADP in the presence of a proton gradient across the membrane. The protein is ATP synthase epsilon chain of Syntrophobacter fumaroxidans (strain DSM 10017 / MPOB).